The chain runs to 258 residues: Imidazole glycerol phosphate synthase subunit HisF (258 aa).

Catalysis depends on residues Asp-11 and Asp-130.

This sequence belongs to the HisA/HisF family. As to quaternary structure, heterodimer of HisH and HisF.

It is found in the cytoplasm. It carries out the reaction 5-[(5-phospho-1-deoxy-D-ribulos-1-ylimino)methylamino]-1-(5-phospho-beta-D-ribosyl)imidazole-4-carboxamide + L-glutamine = D-erythro-1-(imidazol-4-yl)glycerol 3-phosphate + 5-amino-1-(5-phospho-beta-D-ribosyl)imidazole-4-carboxamide + L-glutamate + H(+). The protein operates within amino-acid biosynthesis; L-histidine biosynthesis; L-histidine from 5-phospho-alpha-D-ribose 1-diphosphate: step 5/9. In terms of biological role, IGPS catalyzes the conversion of PRFAR and glutamine to IGP, AICAR and glutamate. The HisF subunit catalyzes the cyclization activity that produces IGP and AICAR from PRFAR using the ammonia provided by the HisH subunit. This chain is Imidazole glycerol phosphate synthase subunit HisF, found in Xanthomonas euvesicatoria pv. vesicatoria (strain 85-10) (Xanthomonas campestris pv. vesicatoria).